Reading from the N-terminus, the 120-residue chain is uncharacterized protein (120 aa).

It to M.jannaschii MJ1503.

This is an uncharacterized protein from Methanocaldococcus jannaschii (strain ATCC 43067 / DSM 2661 / JAL-1 / JCM 10045 / NBRC 100440) (Methanococcus jannaschii).